Reading from the N-terminus, the 22-residue chain is Motilin (22 aa).

The interval F1–Q22 is disordered. The span at E9–Q22 shows a compositional bias: basic and acidic residues.

This sequence belongs to the motilin family.

It localises to the secreted. Functionally, plays an important role in the regulation of interdigestive gastrointestinal motility and indirectly causes rhythmic contraction of duodenal and colonic smooth muscle. The sequence is that of Motilin (MLN) from Canis lupus familiaris (Dog).